Consider the following 327-residue polypeptide: Voltage-dependent calcium channel gamma-4 subunit (327 aa).

Topologically, residues 1–9 (MVRCDRGLQ) are cytoplasmic. A helical transmembrane segment spans residues 10–30 (MLLTTAGAFAAFSLMAIAIGT). Residues 31–107 (DYWLYSSAHI…EYLLRIVRAS (77 aa)) are Extracellular-facing. N-linked (GlcNAc...) asparagine glycans are attached at residues N42 and N45. The chain crosses the membrane as a helical span at residues 108–128 (SVFPILSTILLLLGGLCIGAG). The Cytoplasmic portion of the chain corresponds to 129-136 (RIYSRKNN). The helical transmembrane segment at 137–157 (IVLSAGILFVAAGLSNIIGII) threads the bilayer. Topologically, residues 158 to 186 (VYISSNTGDPSDKRDEDKKNHYNYGWSFY) are extracellular. Residues 187–207 (FGALSFIVAETVGVLAVNIYI) traverse the membrane as a helical segment. At 208-327 (EKNKELRFKT…SMLNRRTTPV (120 aa)) the chain is on the cytoplasmic side. Positions 235–261 (SYRYRRRRSRSSSRSTEASPSRDVSPM) are disordered. Over residues 246–256 (SSRSTEASPSR) the composition is skewed to low complexity. Position 259 is a phosphoserine (S259).

The protein belongs to the PMP-22/EMP/MP20 family. CACNG subfamily. In terms of assembly, interacts with CACNA1C. Identified in a complex with the L-type calcium channel subunits CACNA1C, CACNA2D1 and either CACNB1 or CACNB2. Acts as an auxiliary subunit for AMPA-selective glutamate receptors (AMPARs). Interacts with GRIA1. In terms of tissue distribution, detected in heart left ventricle.

The protein localises to the cell membrane. Regulates the activity of L-type calcium channels that contain CACNA1C as pore-forming subunit. Regulates the trafficking and gating properties of AMPA-selective glutamate receptors (AMPARs), including GRIA1 and GRIA4. Promotes their targeting to the cell membrane and synapses and modulates their gating properties by slowing their rates of activation, deactivation and desensitization and by mediating their resensitization. The sequence is that of Voltage-dependent calcium channel gamma-4 subunit (CACNG4) from Homo sapiens (Human).